The primary structure comprises 179 residues: UPF0227 protein Sbal_2415 (179 aa).

This sequence belongs to the UPF0227 family.

The sequence is that of UPF0227 protein Sbal_2415 from Shewanella baltica (strain OS155 / ATCC BAA-1091).